Reading from the N-terminus, the 179-residue chain is Inner membrane-spanning protein YciB (179 aa).

5 helical membrane-spanning segments follow: residues 22–42 (IYAA…YSWV), 50–70 (MALI…FFHN), 76–96 (WKVT…QWVM), 121–141 (LAWA…AFWL), and 149–169 (FKVF…GIYI).

This sequence belongs to the YciB family.

The protein localises to the cell inner membrane. Functionally, plays a role in cell envelope biogenesis, maintenance of cell envelope integrity and membrane homeostasis. The chain is Inner membrane-spanning protein YciB from Shigella dysenteriae serotype 1 (strain Sd197).